The chain runs to 686 residues: Putative cuticle collagen 99 (686 aa).

Disordered stretches follow at residues 42 to 79 (PPIG…PVGP) and 163 to 444 (GPIG…SLVA). Positions 67–79 (PPGPPGERGPVGP) are enriched in pro residues. Triple-helical region regions lie at residues 142–201 (GMPG…KGDR), 230–263 (GPPG…GFDG), and 268–296 (GPKG…EKGD). The span at 231–243 (PPGPPGPPGPPGP) shows a compositional bias: pro residues. Over residues 246–256 (RDGRHGMKGDR) the composition is skewed to basic and acidic residues. The span at 306–318 (GQSVSTVSSSGSQ) shows a compositional bias: low complexity. Basic and acidic residues-rich tracts occupy residues 361-373 (EKGE…ETGD) and 401-417 (RDGR…HGLR). The triple-helical region stretch occupies residues 394–439 (GPPGPPGRDGRPGEKGEKGEHGLRGDMGLPGPEGTPGKRGRRGRHG). Residues N446 and N535 are each glycosylated (N-linked (GlcNAc...) asparagine). A disordered region spans residues 475-650 (KNVIPGPPGP…TGPDGLPLPY (176 aa)). 3 triple-helical region regions span residues 479–536 (PGPP…SGNQ), 538–576 (GPRG…PGPM), and 577–636 (GLRG…PGLD). Pro residues predominate over residues 540–549 (RGPPGLPGPP). The span at 563 to 581 (QPGALGLPGHPGPMGLRGP) shows a compositional bias: low complexity.

The protein belongs to the cuticular collagen family. As to quaternary structure, collagen polypeptide chains are complexed within the cuticle by disulfide bonds and other types of covalent cross-links.

Nematode cuticles are composed largely of collagen-like proteins. The cuticle functions both as an exoskeleton and as a barrier to protect the worm from its environment. This is Putative cuticle collagen 99 from Caenorhabditis briggsae.